A 172-amino-acid polypeptide reads, in one-letter code: Peroxiredoxin AHP1 (172 aa).

Positions 4–171 constitute a Thioredoxin domain; sequence LQPGDSFPAN…VLTVLGNQGK (168 aa). Lys-44 participates in a covalent cross-link: Glycyl lysine isopeptide (Lys-Gly) (interchain with G-Cter in URM1). Cys-60 (cysteine sulfenic acid (-SOH) intermediate) is an active-site residue. Cys-60 bears the Cysteine persulfide mark. Glycyl lysine isopeptide (Lys-Gly) (interchain with G-Cter in URM1) cross-links involve residues Lys-63, Lys-99, Lys-141, Lys-156, and Lys-171.

Belongs to the peroxiredoxin family. Prx5 subfamily. As to quaternary structure, homodimer; disulfide-linked, upon oxidation. In terms of processing, conjugated to URM1, a ubiquitin-like protein, in response to oxidative stresses. The attachment of URM1 to lysine residues exclusively depends on the presence of a peroxidatic cysteine in the target protein, with low specificity for the particular residue, motif, or structural context at which urmylation can occur. The URM1-conjugation reaction is mechanistically and directly coupled to the process of cysteine persulfidation, transfering the sulfur atom of the URM1 thiocarboxyl group to redox-active cysteine residues in the target protein if it is exposed to oxidative conditions. Post-translationally, persulfidated on specific redox-active cysteine residues. Persulfidation (also called protein S-sulfhydration) may provide a molecular mechanism that enables cells to protect vulnerable cysteine residues from reactive oxygen species (ROS) under stress conditions.

It is found in the cytoplasm. It carries out the reaction a hydroperoxide + [thioredoxin]-dithiol = an alcohol + [thioredoxin]-disulfide + H2O. Its function is as follows. Thiol-specific peroxidase that catalyzes the reduction of hydrogen peroxide and organic hydroperoxides to water and alcohols, respectively. Plays a role in cell protection against oxidative stress by detoxifying peroxides and as sensor of hydrogen peroxide-mediated signaling events. Preferentially eliminates organic peroxides rather than hydrogen peroxide. Relays alkyl hydroperoxides as a signal to the transcription factor CAD1/YAP2 by inducing the formation of intramolecular disulfide bonds in CAD1, which causes its nuclear accumulation and activation. Involved in cellular Mn(2+) homeostasis. The polypeptide is Peroxiredoxin AHP1 (AHP1) (Chaetomium thermophilum (strain DSM 1495 / CBS 144.50 / IMI 039719) (Thermochaetoides thermophila)).